We begin with the raw amino-acid sequence, 152 residues long: Large ribosomal subunit protein bL9 (152 aa).

Belongs to the bacterial ribosomal protein bL9 family.

Its function is as follows. Binds to the 23S rRNA. This is Large ribosomal subunit protein bL9 from Synechococcus sp. (strain WH7803).